Consider the following 432-residue polypeptide: D-amino acid dehydrogenase (432 aa).

Residue 3–17 participates in FAD binding; sequence VVILGSGVVGVASAW.

It belongs to the DadA oxidoreductase family. Requires FAD as cofactor.

It carries out the reaction a D-alpha-amino acid + A + H2O = a 2-oxocarboxylate + AH2 + NH4(+). Its pathway is amino-acid degradation; D-alanine degradation; NH(3) and pyruvate from D-alanine: step 1/1. Oxidative deamination of D-amino acids. In Klebsiella pneumoniae (strain 342), this protein is D-amino acid dehydrogenase.